Here is a 138-residue protein sequence, read N- to C-terminus: Superoxide dismutase [Mn] (138 aa).

Residues His2, His49, Asp133, and His137 each coordinate Mn(2+).

The protein belongs to the iron/manganese superoxide dismutase family. Mn(2+) serves as cofactor.

It carries out the reaction 2 superoxide + 2 H(+) = H2O2 + O2. Destroys superoxide anion radicals which are normally produced within the cells and which are toxic to biological systems. This is Superoxide dismutase [Mn] (sodA) from Mycolicibacterium phlei (Mycobacterium phlei).